The sequence spans 370 residues: Tryptophan--tRNA ligase (370 aa).

Residues 75-83 (PSGKMHFGH) carry the 'HIGH' region motif. The 'KMSKS' region signature appears at 255-259 (KMSSS).

It belongs to the class-I aminoacyl-tRNA synthetase family.

Its subcellular location is the cytoplasm. The enzyme catalyses tRNA(Trp) + L-tryptophan + ATP = L-tryptophyl-tRNA(Trp) + AMP + diphosphate + H(+). The polypeptide is Tryptophan--tRNA ligase (Methanocaldococcus jannaschii (strain ATCC 43067 / DSM 2661 / JAL-1 / JCM 10045 / NBRC 100440) (Methanococcus jannaschii)).